A 434-amino-acid chain; its full sequence is Citrate synthase (434 aa).

Residues His-310 and Asp-368 contribute to the active site.

This sequence belongs to the citrate synthase family.

The catalysed reaction is oxaloacetate + acetyl-CoA + H2O = citrate + CoA + H(+). It functions in the pathway carbohydrate metabolism; tricarboxylic acid cycle; isocitrate from oxaloacetate: step 1/2. The protein is Citrate synthase (gltA) of Bradyrhizobium diazoefficiens (strain JCM 10833 / BCRC 13528 / IAM 13628 / NBRC 14792 / USDA 110).